A 2226-amino-acid polypeptide reads, in one-letter code: Rotatin (2226 aa).

The segment at glutamate 295–asparagine 346 is disordered. The segment covering proline 307–arginine 319 has biased composition (low complexity). Serine 311 carries the post-translational modification Phosphoserine. Lysine 813 is subject to N6-acetyllysine.

Belongs to the rotatin family. In terms of assembly, interacts with PPP1R35; this interaction allows the mutual recruitment to the centriole.

The protein resides in the cytoplasm. The protein localises to the cytoskeleton. Its subcellular location is the cilium basal body. In terms of biological role, involved in the genetic cascade that governs left-right specification. Required for correct asymmetric expression of NODAL, LEFTY and PITX2. The chain is Rotatin from Mus musculus (Mouse).